Consider the following 184-residue polypeptide: ATP synthase subunit b, chloroplastic (184 aa).

The helical transmembrane segment at 27-49 threads the bilayer; sequence LATNLINLSVVIGVLIFFGKGVL.

It belongs to the ATPase B chain family. As to quaternary structure, F-type ATPases have 2 components, F(1) - the catalytic core - and F(0) - the membrane proton channel. F(1) has five subunits: alpha(3), beta(3), gamma(1), delta(1), epsilon(1). F(0) has four main subunits: a(1), b(1), b'(1) and c(10-14). The alpha and beta chains form an alternating ring which encloses part of the gamma chain. F(1) is attached to F(0) by a central stalk formed by the gamma and epsilon chains, while a peripheral stalk is formed by the delta, b and b' chains.

The protein resides in the plastid. The protein localises to the chloroplast thylakoid membrane. F(1)F(0) ATP synthase produces ATP from ADP in the presence of a proton or sodium gradient. F-type ATPases consist of two structural domains, F(1) containing the extramembraneous catalytic core and F(0) containing the membrane proton channel, linked together by a central stalk and a peripheral stalk. During catalysis, ATP synthesis in the catalytic domain of F(1) is coupled via a rotary mechanism of the central stalk subunits to proton translocation. Functionally, component of the F(0) channel, it forms part of the peripheral stalk, linking F(1) to F(0). This is ATP synthase subunit b, chloroplastic from Jasminum nudiflorum (Winter jasmine).